A 1061-amino-acid chain; its full sequence is Bifunctional cytochrome P450/NADPH--P450 reductase 1 (1061 aa).

A cytochrome P450 region spans residues 1-475; it reads MKETSPIPQP…AEKAAPDEQK (475 aa). Cys403 lines the heme pocket. Residues 476–1061 form an NADPH--P450 reductase region; sequence EKTEAKGASV…MYAKDVWAGI (586 aa). One can recognise a Flavodoxin-like domain in the interval 493 to 632; the sequence is LLVLYGSDTG…QLDEWKKSMW (140 aa). Residues 499-504, 546-549, 580-582, and 588-590 each bind FMN; these read SDTGTA, SYNG, CGD, and TYQ. In terms of domain architecture, FAD-binding FR-type spans 671 to 904; that stretch reads YEASHASIAE…RTPESRFQLP (234 aa).

The protein in the N-terminal section; belongs to the cytochrome P450 family. Requires FAD as cofactor. The cofactor is FMN. It depends on heme b as a cofactor.

It is found in the cytoplasm. It catalyses the reaction an organic molecule + reduced [NADPH--hemoprotein reductase] + O2 = an alcohol + oxidized [NADPH--hemoprotein reductase] + H2O + H(+). The enzyme catalyses 2 oxidized [cytochrome P450] + NADPH = 2 reduced [cytochrome P450] + NADP(+) + H(+). Its function is as follows. Functions as a fatty acid monooxygenase. Catalyzes hydroxylation of a range of long-chain fatty acids, with a preference for long-chain unsaturated and branched-chain fatty acids over saturated fatty acids. Hydroxylation of myristic acid occurs mainly at the omega-2 position. Also displays a NADPH-dependent reductase activity in the C-terminal domain, which allows electron transfer from NADPH to the heme iron of the cytochrome P450 N-terminal domain. Is also able to catalyze efficient oxidation of sodium dodecyl sulfate (SDS). This chain is Bifunctional cytochrome P450/NADPH--P450 reductase 1, found in Bacillus subtilis (strain 168).